Here is a 227-residue protein sequence, read N- to C-terminus: PKHD-type hydroxylase ACIAD0531 (227 aa).

One can recognise a Fe2OG dioxygenase domain in the interval 78 to 178 (HIIPPLFNRY…RFASFFWVQS (101 aa)). Histidine 96, aspartate 98, and histidine 159 together coordinate Fe cation. 2-oxoglutarate is bound at residue arginine 169.

The cofactor is Fe(2+). It depends on L-ascorbate as a cofactor.

The sequence is that of PKHD-type hydroxylase ACIAD0531 from Acinetobacter baylyi (strain ATCC 33305 / BD413 / ADP1).